The primary structure comprises 559 residues: Germacrene A synthase 1 (559 aa).

The Mg(2+) site is built by Asp312, Asp316, Asp456, Thr460, and Glu464. Positions 312–316 (DDTYD) match the DDXXD motif motif.

The protein belongs to the terpene synthase family. Monomer. It depends on Mg(2+) as a cofactor. As to expression, mainly expressed in sunflower trichomes.

It catalyses the reaction (2E,6E)-farnesyl diphosphate = (+)-(R)-germacrene A + diphosphate. The protein operates within secondary metabolite biosynthesis; terpenoid biosynthesis. Functionally, sesquiterpene synthase involved in germacrene A biosynthesis. Germacrene A is a precursor of several sesquiterpene lactones. This chain is Germacrene A synthase 1, found in Helianthus annuus (Common sunflower).